Here is a 278-residue protein sequence, read N- to C-terminus: Large ribosomal subunit protein uL2 (278 aa).

2 stretches are compositionally biased toward basic residues: residues 210–219 (RSRWLGKRPQ) and 252–263 (KKSRGIKTRNSK). Positions 210 to 278 (RSRWLGKRPQ…LIIRHRKGNK (69 aa)) are disordered.

This sequence belongs to the universal ribosomal protein uL2 family. Part of the 50S ribosomal subunit. Forms a bridge to the 30S subunit in the 70S ribosome.

In terms of biological role, one of the primary rRNA binding proteins. Required for association of the 30S and 50S subunits to form the 70S ribosome, for tRNA binding and peptide bond formation. It has been suggested to have peptidyltransferase activity; this is somewhat controversial. Makes several contacts with the 16S rRNA in the 70S ribosome. In Lactobacillus johnsonii (strain CNCM I-12250 / La1 / NCC 533), this protein is Large ribosomal subunit protein uL2.